Consider the following 23-residue polypeptide: Protein male-specific 40 (23 aa).

In terms of tissue distribution, during early embryogenesis expression is initially detected at the early cleavage stages in the nucleus of two discrete cells. Subsequently, expression is abundant in the cytoplasm of the newly formed pole cells. Male-specific expression during the third larval instar.

Its subcellular location is the cytoplasm. It localises to the nucleus. This chain is Protein male-specific 40, found in Drosophila melanogaster (Fruit fly).